The following is a 419-amino-acid chain: Probable dual-specificity RNA methyltransferase RlmN (419 aa).

Residues 1 to 21 form a disordered region; it reads MTAESDSPDGPVSAGTGRPVR. Glu-124 (proton acceptor) is an active-site residue. In terms of domain architecture, Radical SAM core spans 130-369; sequence YPDRATVCVS…ATTVRDTRGR (240 aa). A disulfide bond links Cys-137 and Cys-375. The [4Fe-4S] cluster site is built by Cys-144, Cys-148, and Cys-151. S-adenosyl-L-methionine is bound by residues 199-200, Ser-233, 256-258, and Asn-332; these read GE and SLH. Residue Cys-375 is the S-methylcysteine intermediate of the active site. The interval 383–419 is disordered; that stretch reads AGRARRVESARPVESARPVGVAGAASGSPAHGSRVLR. Low complexity predominate over residues 397–419; it reads SARPVGVAGAASGSPAHGSRVLR.

The protein belongs to the radical SAM superfamily. RlmN family. It depends on [4Fe-4S] cluster as a cofactor.

The protein resides in the cytoplasm. It carries out the reaction adenosine(2503) in 23S rRNA + 2 reduced [2Fe-2S]-[ferredoxin] + 2 S-adenosyl-L-methionine = 2-methyladenosine(2503) in 23S rRNA + 5'-deoxyadenosine + L-methionine + 2 oxidized [2Fe-2S]-[ferredoxin] + S-adenosyl-L-homocysteine. It catalyses the reaction adenosine(37) in tRNA + 2 reduced [2Fe-2S]-[ferredoxin] + 2 S-adenosyl-L-methionine = 2-methyladenosine(37) in tRNA + 5'-deoxyadenosine + L-methionine + 2 oxidized [2Fe-2S]-[ferredoxin] + S-adenosyl-L-homocysteine. Functionally, specifically methylates position 2 of adenine 2503 in 23S rRNA and position 2 of adenine 37 in tRNAs. This chain is Probable dual-specificity RNA methyltransferase RlmN, found in Frankia alni (strain DSM 45986 / CECT 9034 / ACN14a).